The primary structure comprises 128 residues: MQKRVRNRLITIIICFCSACLGISIILYNLEKNIVFFLPPSKINEIEQGQELRVGGLVKTDSINKIADDKISFVITDNIKDCEILYQGALPALFRKGQGIIAIGQLSNGKFIARQLLAKHDENYRPPQ.

At Met1–Arg8 the chain is on the cytoplasmic side. The chain crosses the membrane as a helical; Signal-anchor for type II membrane protein span at residues Leu9–Asn29. Over Leu30–Gln128 the chain is Periplasmic. The heme site is built by His120 and Tyr124.

The protein belongs to the CcmE/CycJ family.

It localises to the cell inner membrane. In terms of biological role, heme chaperone required for the biogenesis of c-type cytochromes. Transiently binds heme delivered by CcmC and transfers the heme to apo-cytochromes in a process facilitated by CcmF and CcmH. The polypeptide is Cytochrome c-type biogenesis protein CcmE (Rickettsia conorii (strain ATCC VR-613 / Malish 7)).